The sequence spans 72 residues: SRY-related protein AES1 (72 aa).

A DNA-binding region (HMG box) is located at residues 1 to 69 (VKRPMNAFMV…KHMADYPDYK (69 aa)).

The protein localises to the nucleus. The chain is SRY-related protein AES1 from Alligator mississippiensis (American alligator).